Consider the following 428-residue polypeptide: Elongation factor 1-alpha (428 aa).

Residues 5 to 225 (KPILNVAFIG…DAFQPPEKPT (221 aa)) form the tr-type G domain. The interval 14-21 (GHVDAGKS) is G1. Residue 14 to 21 (GHVDAGKS) participates in GTP binding. Ser-21 lines the Mg(2+) pocket. Residues 70-74 (GVTID) form a G2 region. The G3 stretch occupies residues 91–94 (DCPG). Residues 91–95 (DCPGH) and 149–152 (NKMD) each bind GTP. The tract at residues 149 to 152 (NKMD) is G4. Residues 189 to 191 (ASL) form a G5 region.

Belongs to the TRAFAC class translation factor GTPase superfamily. Classic translation factor GTPase family. EF-Tu/EF-1A subfamily.

The protein resides in the cytoplasm. It carries out the reaction GTP + H2O = GDP + phosphate + H(+). In terms of biological role, GTP hydrolase that promotes the GTP-dependent binding of aminoacyl-tRNA to the A-site of ribosomes during protein biosynthesis. This Methanococcus maripaludis (strain C6 / ATCC BAA-1332) protein is Elongation factor 1-alpha.